Reading from the N-terminus, the 63-residue chain is Hyphancin-3G (63 aa).

Residues 1–22 (MNFSRILFFMFACFVALASVSA) form the signal peptide. Residues 23–26 (VPEP) constitute a propeptide, removed by a dipeptidylpeptidase. Leucine amide is present on L61.

Belongs to the cecropin family.

The protein resides in the secreted. Its function is as follows. Has antibacterial activity. The chain is Hyphancin-3G from Hyphantria cunea (Fall webworm moth).